The sequence spans 157 residues: Ribosome maturation factor RimP (157 aa).

The protein belongs to the RimP family.

It localises to the cytoplasm. In terms of biological role, required for maturation of 30S ribosomal subunits. The sequence is that of Ribosome maturation factor RimP from Levilactobacillus brevis (strain ATCC 367 / BCRC 12310 / CIP 105137 / JCM 1170 / LMG 11437 / NCIMB 947 / NCTC 947) (Lactobacillus brevis).